A 438-amino-acid polypeptide reads, in one-letter code: GTPase Der (438 aa).

EngA-type G domains are found at residues 4-168 and 177-352; these read PIVA…PKGY and IRIA…TNYS. GTP is bound by residues 10–17, 57–61, 120–123, 183–190, 230–234, and 295–298; these read GRPNVGKS, DTGGI, NKID, GKPNVGKS, DTAGL, and NKWD. A KH-like domain is found at 353–437; that stretch reads KRISTGVLND…GIKMEFRERK (85 aa).

The protein belongs to the TRAFAC class TrmE-Era-EngA-EngB-Septin-like GTPase superfamily. EngA (Der) GTPase family. Associates with the 50S ribosomal subunit.

Functionally, GTPase that plays an essential role in the late steps of ribosome biogenesis. The sequence is that of GTPase Der from Clostridium tetani (strain Massachusetts / E88).